A 359-amino-acid chain; its full sequence is Membrane-bound lytic murein transglycosylase C (359 aa).

An N-terminal signal peptide occupies residues 1–16; sequence MKKYLALALIAPLLIS. A lipid anchor (N-palmitoyl cysteine) is attached at C17. C17 is lipidated: S-diacylglycerol cysteine.

Belongs to the transglycosylase Slt family.

Its subcellular location is the cell outer membrane. The enzyme catalyses Exolytic cleavage of the (1-&gt;4)-beta-glycosidic linkage between N-acetylmuramic acid (MurNAc) and N-acetylglucosamine (GlcNAc) residues in peptidoglycan, from either the reducing or the non-reducing ends of the peptidoglycan chains, with concomitant formation of a 1,6-anhydrobond in the MurNAc residue.. Functionally, murein-degrading enzyme. May play a role in recycling of muropeptides during cell elongation and/or cell division. The protein is Membrane-bound lytic murein transglycosylase C of Escherichia fergusonii (strain ATCC 35469 / DSM 13698 / CCUG 18766 / IAM 14443 / JCM 21226 / LMG 7866 / NBRC 102419 / NCTC 12128 / CDC 0568-73).